Here is a 1003-residue protein sequence, read N- to C-terminus: Phosphoenolpyruvate carboxylase (1003 aa).

Residues 1–24 (MIMTVSDPGGSSMSSSSAITPESE) form a disordered region. Residues His-190 and Lys-646 contribute to the active site.

The protein belongs to the PEPCase type 1 family. Mg(2+) is required as a cofactor.

The enzyme catalyses oxaloacetate + phosphate = phosphoenolpyruvate + hydrogencarbonate. Functionally, forms oxaloacetate, a four-carbon dicarboxylic acid source for the tricarboxylic acid cycle. In Synechococcus sp. (strain WH7803), this protein is Phosphoenolpyruvate carboxylase.